The sequence spans 239 residues: Fatty acid metabolism regulator protein (239 aa).

In terms of domain architecture, HTH gntR-type spans 6-74 (KGPASFAEKY…HGKPTQVNNF (69 aa)). Residues 34 to 53 (ERELSELIGVTRTTLREVLQ) constitute a DNA-binding region (H-T-H motif).

In terms of assembly, homodimer.

Its subcellular location is the cytoplasm. Multifunctional regulator of fatty acid metabolism. This chain is Fatty acid metabolism regulator protein, found in Shewanella frigidimarina (strain NCIMB 400).